The chain runs to 483 residues: GTPase Obg (483 aa).

In terms of domain architecture, Obg spans 2–159 (SRFIDRVVLH…RDLVLELKSV (158 aa)). The 181-residue stretch at 160–340 (ADVGLLGFPS…LTFALAKMVR (181 aa)) folds into the OBG-type G domain. GTP-binding positions include 166–173 (GFPSAGKS), 191–195 (FTTLV), 212–215 (DVPG), 292–295 (NKTD), and 321–323 (SAV). Ser173 and Thr193 together coordinate Mg(2+). The OCT domain occupies 358 to 438 (PVKVKDSSFT…IGDVSFEWEP (81 aa)).

The protein belongs to the TRAFAC class OBG-HflX-like GTPase superfamily. OBG GTPase family. Monomer. It depends on Mg(2+) as a cofactor.

Its subcellular location is the cytoplasm. Its function is as follows. An essential GTPase which binds GTP, GDP and possibly (p)ppGpp with moderate affinity, with high nucleotide exchange rates and a fairly low GTP hydrolysis rate. Plays a role in control of the cell cycle, stress response, ribosome biogenesis and in those bacteria that undergo differentiation, in morphogenesis control. The protein is GTPase Obg of Rhodococcus erythropolis (strain PR4 / NBRC 100887).